A 381-amino-acid chain; its full sequence is MSLNMFWFLPTHGDGHYLGTEEGSRPVDHGYLQQIAQAADRLGYTGVLIPTGRSCEDAWLVEASMIPVTQRLKFLVALRPSVTSPTVAARQAATLDRLSNGRALFNLVTGSDPQELAGDGVFLDHSERYEASAEFTQVWRRLLLGETVDFNGKHIHVRGAKLLFPPIQQPYPPLYFGGSSDVAQELAAEQVDLYLTWGEPPELVKEKIEQVRAKAAAHGRKIRFGIRLHVIVRETNDEAWQAAERLISHLDDETIAKAQAAFARTDSVGQQRMAALHNGKRDNLEISPNLWAGVGLVRGGAGTALVGDGPTVAARINEYAALGIDSFVLSGYPHLEEAYRVGELLFPHLDVAIPEIPQPQPLNPQGEAVANDFIPRNVAQS.

Belongs to the SsuD family. Homotetramer.

The catalysed reaction is an alkanesulfonate + FMNH2 + O2 = an aldehyde + FMN + sulfite + H2O + 2 H(+). Catalyzes the desulfonation of aliphatic sulfonates. This Escherichia coli O7:K1 (strain IAI39 / ExPEC) protein is Alkanesulfonate monooxygenase.